A 197-amino-acid polypeptide reads, in one-letter code: Holliday junction branch migration complex subunit RuvA (197 aa).

A domain I region spans residues 1–63 (MYAYLKGIIT…EDAHLLYGFR (63 aa)). The segment at 64–142 (SEDEKKLFLS…VAGDDLPAKV (79 aa)) is domain II. The flexible linker stretch occupies residues 143-147 (AVQAS). The tract at residues 148–197 (AENQELEEAMEAMLALGYKATELKKIKKFFEGTTDTAENYIKSALKMLVK) is domain III.

It belongs to the RuvA family. In terms of assembly, homotetramer. Forms an RuvA(8)-RuvB(12)-Holliday junction (HJ) complex. HJ DNA is sandwiched between 2 RuvA tetramers; dsDNA enters through RuvA and exits via RuvB. An RuvB hexamer assembles on each DNA strand where it exits the tetramer. Each RuvB hexamer is contacted by two RuvA subunits (via domain III) on 2 adjacent RuvB subunits; this complex drives branch migration. In the full resolvosome a probable DNA-RuvA(4)-RuvB(12)-RuvC(2) complex forms which resolves the HJ.

The protein resides in the cytoplasm. Its function is as follows. The RuvA-RuvB-RuvC complex processes Holliday junction (HJ) DNA during genetic recombination and DNA repair, while the RuvA-RuvB complex plays an important role in the rescue of blocked DNA replication forks via replication fork reversal (RFR). RuvA specifically binds to HJ cruciform DNA, conferring on it an open structure. The RuvB hexamer acts as an ATP-dependent pump, pulling dsDNA into and through the RuvAB complex. HJ branch migration allows RuvC to scan DNA until it finds its consensus sequence, where it cleaves and resolves the cruciform DNA. This chain is Holliday junction branch migration complex subunit RuvA, found in Streptococcus pneumoniae (strain Hungary19A-6).